Here is a 482-residue protein sequence, read N- to C-terminus: Zinc finger CCCH domain-containing protein 40 (482 aa).

A C3H1-type zinc finger spans residues 157–184 (RNRAHVCSFYVRGECTRGAECPYRHEMP). Positions 228-301 (RTLYIGGLNN…IRLKLMWGKP (74 aa)) constitute an RRM domain. Low complexity-rich tracts occupy residues 329 to 347 (SQQQ…GQQQ) and 389 to 428 (PGPQ…YGGY). Residues 329 to 482 (SQQQSGDQPQ…VPPPQQTTQN (154 aa)) are disordered. Residues 429–446 (MPPPRMPYPPPPQYPPYQ) are compositionally biased toward pro residues. The span at 452–466 (PAQSQASSSQQPAPA) shows a compositional bias: low complexity. Residues 473–482 (VPPPQQTTQN) show a composition bias toward pro residues.

This is Zinc finger CCCH domain-containing protein 40 from Oryza sativa subsp. japonica (Rice).